Consider the following 71-residue polypeptide: Large ribosomal subunit protein bL31 (71 aa).

Residues C16, C18, C38, and C41 each coordinate Zn(2+).

This sequence belongs to the bacterial ribosomal protein bL31 family. Type A subfamily. Part of the 50S ribosomal subunit. Zn(2+) is required as a cofactor.

Binds the 23S rRNA. The polypeptide is Large ribosomal subunit protein bL31 (Chromobacterium violaceum (strain ATCC 12472 / DSM 30191 / JCM 1249 / CCUG 213 / NBRC 12614 / NCIMB 9131 / NCTC 9757 / MK)).